A 311-amino-acid chain; its full sequence is Aspartate carbamoyltransferase catalytic subunit (311 aa).

Residues Arg55 and Thr56 each contribute to the carbamoyl phosphate site. An L-aspartate-binding site is contributed by Lys85. Residues Arg106, His135, and Gln138 each contribute to the carbamoyl phosphate site. The L-aspartate site is built by Arg168 and Arg230. Carbamoyl phosphate contacts are provided by Leu268 and Pro269.

Belongs to the aspartate/ornithine carbamoyltransferase superfamily. ATCase family. In terms of assembly, heterododecamer (2C3:3R2) of six catalytic PyrB chains organized as two trimers (C3), and six regulatory PyrI chains organized as three dimers (R2).

The catalysed reaction is carbamoyl phosphate + L-aspartate = N-carbamoyl-L-aspartate + phosphate + H(+). The protein operates within pyrimidine metabolism; UMP biosynthesis via de novo pathway; (S)-dihydroorotate from bicarbonate: step 2/3. Functionally, catalyzes the condensation of carbamoyl phosphate and aspartate to form carbamoyl aspartate and inorganic phosphate, the committed step in the de novo pyrimidine nucleotide biosynthesis pathway. This chain is Aspartate carbamoyltransferase catalytic subunit, found in Klebsiella pneumoniae (strain 342).